The chain runs to 318 residues: Acetyl-coenzyme A carboxylase carboxyl transferase subunit beta (318 aa).

The CoA carboxyltransferase N-terminal domain occupies 25–294 (LWSKCSECGT…AVKGELPAPA (270 aa)). 4 residues coordinate Zn(2+): cysteine 29, cysteine 32, cysteine 48, and cysteine 51. A C4-type zinc finger spans residues 29–51 (CSECGTMLFHRELSDNLNVCTNC). Residues 286–318 (VKGELPAPAPLESDAETALASDTDPNGAPPSKD) form a disordered region.

The protein belongs to the AccD/PCCB family. In terms of assembly, acetyl-CoA carboxylase is a heterohexamer composed of biotin carboxyl carrier protein (AccB), biotin carboxylase (AccC) and two subunits each of ACCase subunit alpha (AccA) and ACCase subunit beta (AccD). Requires Zn(2+) as cofactor.

The protein localises to the cytoplasm. It carries out the reaction N(6)-carboxybiotinyl-L-lysyl-[protein] + acetyl-CoA = N(6)-biotinyl-L-lysyl-[protein] + malonyl-CoA. The protein operates within lipid metabolism; malonyl-CoA biosynthesis; malonyl-CoA from acetyl-CoA: step 1/1. In terms of biological role, component of the acetyl coenzyme A carboxylase (ACC) complex. Biotin carboxylase (BC) catalyzes the carboxylation of biotin on its carrier protein (BCCP) and then the CO(2) group is transferred by the transcarboxylase to acetyl-CoA to form malonyl-CoA. This is Acetyl-coenzyme A carboxylase carboxyl transferase subunit beta from Jannaschia sp. (strain CCS1).